We begin with the raw amino-acid sequence, 287 residues long: Inorganic pyrophosphatase (287 aa).

Arg80 provides a ligand contact to diphosphate. Mg(2+)-binding residues include Asp117, Asp122, and Asp154.

The protein belongs to the PPase family. Mg(2+) serves as cofactor.

The protein localises to the cytoplasm. The enzyme catalyses diphosphate + H2O = 2 phosphate + H(+). This Yarrowia lipolytica (strain CLIB 122 / E 150) (Yeast) protein is Inorganic pyrophosphatase (IPP1).